The chain runs to 360 residues: Peptide chain release factor 1 (360 aa).

The residue at position 237 (Gln-237) is an N5-methylglutamine.

The protein belongs to the prokaryotic/mitochondrial release factor family. In terms of processing, methylated by PrmC. Methylation increases the termination efficiency of RF1.

It localises to the cytoplasm. Its function is as follows. Peptide chain release factor 1 directs the termination of translation in response to the peptide chain termination codons UAG and UAA. This is Peptide chain release factor 1 from Pseudomonas putida (strain W619).